The sequence spans 102 residues: PE family immunomodulator PE5 (102 aa).

Residues Leu3–Ala92 enclose the PE domain.

This sequence belongs to the mycobacterial PE family.

It localises to the secreted. The protein localises to the cell envelope. It is found in the cell surface. Its function is as follows. Important for the siderophore-mediated iron-acquisition function of ESX-3. May play a pivotal role in the evasion of host immune response by M.tuberculosis. Mediates production of IL-10 via activation of the p38 and ERK1/2 mitogen-activated protein kinase (MAPK) signaling pathways. This chain is PE family immunomodulator PE5, found in Mycobacterium tuberculosis (strain ATCC 25618 / H37Rv).